Here is a 152-residue protein sequence, read N- to C-terminus: Putative polyketide cyclase (152 aa).

To polyketide cyclases.

It participates in antibiotic biosynthesis; curamycin biosynthesis. The sequence is that of Putative polyketide cyclase (curF) from Streptomyces cyaneus (Streptomyces curacoi).